The following is a 334-amino-acid chain: o-succinylbenzoate synthase (334 aa).

Lys107 functions as the Proton donor in the catalytic mechanism. Asp135, Glu162, and Asp185 together coordinate Mg(2+). Catalysis depends on Lys209, which acts as the Proton acceptor.

Belongs to the mandelate racemase/muconate lactonizing enzyme family. MenC type 1 subfamily. It depends on a divalent metal cation as a cofactor.

The catalysed reaction is (1R,6R)-6-hydroxy-2-succinyl-cyclohexa-2,4-diene-1-carboxylate = 2-succinylbenzoate + H2O. Its pathway is quinol/quinone metabolism; 1,4-dihydroxy-2-naphthoate biosynthesis; 1,4-dihydroxy-2-naphthoate from chorismate: step 4/7. The protein operates within quinol/quinone metabolism; menaquinone biosynthesis. Functionally, converts 2-succinyl-6-hydroxy-2,4-cyclohexadiene-1-carboxylate (SHCHC) to 2-succinylbenzoate (OSB). This is o-succinylbenzoate synthase from Mycobacterium leprae (strain TN).